The chain runs to 267 residues: Soluble interferon gamma receptor OPG193 (267 aa).

An N-terminal signal peptide occupies residues 1-17; that stretch reads MRYIIILAVLFINSIHA. 2 N-linked (GlcNAc...) asparagine; by host glycosylation sites follow: asparagine 42 and asparagine 150.

It belongs to the type II cytokine receptor family. As to quaternary structure, homodimer. Interacts with host IFNG.

The protein resides in the secreted. In terms of biological role, counteracts the antiviral effects of host IFN-gamma. Acts as a soluble IFN-gamma receptor and thus inhibits the interaction between host IFN-gamma and its receptor. The polypeptide is Soluble interferon gamma receptor OPG193 (OPG193) (Cynomys gunnisoni (Gunnison's prairie dog)).